The following is a 113-amino-acid chain: Small ribosomal subunit protein bS6 (113 aa).

The protein belongs to the bacterial ribosomal protein bS6 family.

Its function is as follows. Binds together with bS18 to 16S ribosomal RNA. This chain is Small ribosomal subunit protein bS6, found in Buchnera aphidicola subsp. Schizaphis graminum (strain Sg).